The primary structure comprises 190 residues: CASP-like protein 1E1 (190 aa).

The interval 1–21 is disordered; that stretch reads MEHESKTKMDGIEMEKGKKEN. Residues 1 to 28 lie on the Cytoplasmic side of the membrane; sequence MEHESKTKMDGIEMEKGKKENGSRKGVE. Residues 29-49 form a helical membrane-spanning segment; the sequence is ITMRVLALVLTMVAATVLGVA. Topologically, residues 50–83 are extracellular; that stretch reads KQTEVVPIKLIPTLPPLNVATTAKASYLSAFVYN. A helical transmembrane segment spans residues 84–104; that stretch reads ICANAIACGYTAISIMIVIIS. Over 105-111 the chain is Cytoplasmic; the sequence is KGRRSKC. Residues 112-132 traverse the membrane as a helical segment; it reads LLMAVLIGDLMMVALLCSSTG. At 133-163 the chain is on the extracellular side; sequence AAGAIGLMGRHGNKHVMWKKVCGVFGKFCNQ. A helical transmembrane segment spans residues 164–184; sequence AAVSVAITLIASVVFMLLVVL. Residues 185-190 are Cytoplasmic-facing; the sequence is DALKLP.

The protein belongs to the Casparian strip membrane proteins (CASP) family. Homodimer and heterodimers.

It is found in the cell membrane. This Arabidopsis lyrata subsp. lyrata (Lyre-leaved rock-cress) protein is CASP-like protein 1E1.